The chain runs to 532 residues: Collagen alpha-1(XXIII) chain (532 aa).

The Cytoplasmic segment spans residues 1-23; that stretch reads MGAGERAAGGGGAQDPGAGCGSR. The helical; Signal-anchor for type II membrane protein transmembrane segment at 24–45 threads the bilayer; it reads ALSALCLLLSVGSAAACLLLGA. The Extracellular portion of the chain corresponds to 46–532; the sequence is QAAALHGRVA…GLPVPGCWHK (487 aa). Disordered regions lie at residues 102–296 and 308–532; these read PSEC…GEQG and LDAL…CWHK. Collagen-like domains lie at 108-166, 173-232, 240-298, and 313-372; these read PPGP…RGAQ, GPPG…PGKK, QPGL…QGDT, and GPPG…MGLS. The span at 129 to 145 shows a compositional bias: low complexity; it reads QSGRDGYPGPLGLDGKP. The segment covering 174–184 has biased composition (pro residues); the sequence is PPGPPGPPGAR. Positions 196–207 are enriched in low complexity; that stretch reads RGAQGPAGPRGE. Pro residues predominate over residues 314–326; sequence PPGPQGAPGPPGI. 2 stretches are compositionally biased toward basic and acidic residues: residues 342–354 and 380–393; these read DGEK…KGDP and PKGE…DHLQ. Positions 403–414 are enriched in pro residues; sequence PGPPGPPGPPGP. Collagen-like domains lie at 404-452 and 455-514; these read GPPG…GPPG and GLPG…PGLD. Basic and acidic residues-rich tracts occupy residues 427 to 441 and 478 to 495; these read DGAK…ERGP and RGEK…ERGV.

In terms of assembly, homotrimer. In terms of processing, undergoes proteolytic cleavage by furin protease to yield a 60 kDa soluble form that forms a homotrimer and exhibits a low affinity interaction with heparin.

It is found in the cell membrane. In Mus musculus (Mouse), this protein is Collagen alpha-1(XXIII) chain (Col23a1).